Consider the following 71-residue polypeptide: Plasticin-C1 (71 aa).

Positions 1 to 22 (MAFLKKSLLLVLFLGLVSLSIC) are cleaved as a signal peptide. Positions 23 to 45 (EEEKRENEDEEKQEDDDQSENKR) are excised as a propeptide. A disordered region spans residues 25–46 (EKRENEDEEKQEDDDQSENKRG). A compositionally biased stretch (acidic residues) spans 30 to 40 (EDEEKQEDDDQ). N68 bears the Asparagine amide mark. The propeptide occupies 70 to 71 (ES).

This sequence belongs to the frog skin active peptide (FSAP) family. Plasticin subfamily. As to expression, expressed by the skin glands.

The protein localises to the secreted. It localises to the target cell membrane. In terms of biological role, neutral peptide with no antimicrobial activity. May act in synergy with cationic peptides by enhancing their activity. Has a moderate hemolytic activity. The sequence is that of Plasticin-C1 from Agalychnis callidryas (Red-eyed tree frog).